The primary structure comprises 74 residues: UPF0435 protein BcerKBAB4_0386 (74 aa).

The protein belongs to the UPF0435 family.

In Bacillus mycoides (strain KBAB4) (Bacillus weihenstephanensis), this protein is UPF0435 protein BcerKBAB4_0386.